The following is a 400-amino-acid chain: Acetylornithine aminotransferase (400 aa).

Pyridoxal 5'-phosphate-binding positions include 102–103 and Phe135; that span reads GA. Arg138 serves as a coordination point for N(2)-acetyl-L-ornithine. Position 220–223 (220–223) interacts with pyridoxal 5'-phosphate; it reads DEVQ. At Lys249 the chain carries N6-(pyridoxal phosphate)lysine. Residue Ser276 participates in N(2)-acetyl-L-ornithine binding. Thr277 provides a ligand contact to pyridoxal 5'-phosphate.

This sequence belongs to the class-III pyridoxal-phosphate-dependent aminotransferase family. ArgD subfamily. In terms of assembly, homodimer. Pyridoxal 5'-phosphate is required as a cofactor.

It is found in the cytoplasm. The catalysed reaction is N(2)-acetyl-L-ornithine + 2-oxoglutarate = N-acetyl-L-glutamate 5-semialdehyde + L-glutamate. Its pathway is amino-acid biosynthesis; L-arginine biosynthesis; N(2)-acetyl-L-ornithine from L-glutamate: step 4/4. This chain is Acetylornithine aminotransferase, found in Gloeobacter violaceus (strain ATCC 29082 / PCC 7421).